Reading from the N-terminus, the 765-residue chain is Amine oxidase [copper-containing] 3 (765 aa).

At 1–6 (MTQKTT) the chain is on the cytoplasmic side. The chain crosses the membrane as a helical; Signal-anchor for type II membrane protein span at residues 7-27 (LVLLALAVITIFALVCVLLAG). Residues 28-765 (RSGDGGGLSQ…SHGGFAYRDN (738 aa)) are Extracellular-facing. Asparagine 137 carries an N-linked (GlcNAc...) asparagine glycan. Cysteine 198 and cysteine 199 are disulfide-bonded. Residues asparagine 232 and asparagine 294 are each glycosylated (N-linked (GlcNAc...) asparagine). Aspartate 386 serves as the catalytic Proton acceptor. Cysteine 404 and cysteine 430 are disulfide-bonded. The Schiff-base intermediate with substrate; via topaquinone role is filled by tyrosine 471. Tyrosine 471 is subject to 2',4',5'-topaquinone. Positions 520 and 522 each coordinate Cu(2+). Positions 529, 530, 531, and 572 each coordinate Ca(2+). N-linked (GlcNAc...) asparagine glycosylation occurs at asparagine 592. Residue glutamate 641 coordinates Ca(2+). Asparagine 659 carries an N-linked (GlcNAc...) asparagine glycan. A Ca(2+)-binding site is contributed by phenylalanine 663. Asparagine 666 is a glycosylation site (N-linked (GlcNAc...) asparagine). Ca(2+) contacts are provided by glutamate 667, aspartate 673, and leucine 674. Histidine 684 is a binding site for Cu(2+). A disulfide bridge connects residues cysteine 734 and cysteine 741.

The protein belongs to the copper/topaquinone oxidase family. As to quaternary structure, homodimer; disulfide-linked. Probably forms heterodimers with AOC2. Cu(2+) serves as cofactor. Requires Ca(2+) as cofactor. L-topaquinone is required as a cofactor. In terms of processing, topaquinone (TPQ) is generated by copper-dependent autoxidation of a specific tyrosyl residue. Post-translationally, N- and O-glycosylated.

Its subcellular location is the cell membrane. The enzyme catalyses methylamine + O2 + H2O = formaldehyde + H2O2 + NH4(+). The catalysed reaction is benzylamine + O2 + H2O = benzaldehyde + H2O2 + NH4(+). It carries out the reaction 2-phenylethylamine + O2 + H2O = 2-phenylacetaldehyde + H2O2 + NH4(+). Its function is as follows. Catalyzes the oxidative deamination of primary amines to the corresponding aldehydes with the concomitant production of hydrogen peroxide and ammonia. Has a preference for the primary monoamines methylamine and benzylamine. Could also act on 2-phenylethylamine but much less efficiently. At endothelial cells surface can also function as a cell adhesion protein that participates in lymphocyte extravasation and recirculation by mediating the binding of lymphocytes to peripheral lymph node vascular endothelial cells in an L-selectin-independent fashion. The protein is Amine oxidase [copper-containing] 3 of Mus musculus (Mouse).